Here is a 3390-residue protein sequence, read N- to C-terminus: Genome polyprotein (3390 aa).

Residues Met1–Met15 are interaction with host EXOC1. The Cytoplasmic segment spans residues Met1–Lys100. The tract at residues Leu37–Phe72 is hydrophobic; homodimerization of capsid protein C. Residues Thr101–Ala114 constitute a propeptide, ER anchor for the capsid protein C, removed in mature form by serine protease NS3. The chain crosses the membrane as a helical span at residues Thr101 to Thr118. At Ser119–Arg243 the chain is on the extracellular side. A glycan (N-linked (GlcNAc...) asparagine; by host) is linked at Asn183. Residues His244–Gln264 form a helical membrane-spanning segment. Position 265 (Lys265) is a topological domain, cytoplasmic. The chain crosses the membrane as a helical span at residues Val266–Thr280. Topologically, residues Met281 to Thr723 are extracellular. Intrachain disulfides connect Cys283–Cys310, Cys340–Cys401, Cys354–Cys385, and Cys372–Cys396. Asn347 is a glycosylation site (N-linked (GlcNAc...) asparagine; by host). The segment at Asp378–Gly391 is fusion peptide. Asn433 is a glycosylation site (N-linked (GlcNAc...) asparagine; by host). Disulfide bonds link Cys463-Cys563 and Cys580-Cys611. Residues Ala724 to Ile744 traverse the membrane as a helical segment. Residues Gly745–Asn750 are Cytoplasmic-facing. Residues Thr751–Val771 traverse the membrane as a helical segment. Residues Gln772–Met1193 are Extracellular-facing. 6 cysteine pairs are disulfide-bonded: Cys777–Cys788, Cys828–Cys916, Cys952–Cys996, Cys1053–Cys1102, Cys1064–Cys1086, and Cys1085–Cys1089. Residues Asn903 and Asn980 are each glycosylated (N-linked (GlcNAc...) asparagine; by host). 2 N-linked (GlcNAc...) asparagine; by host glycosylation sites follow: Asn1132 and Asn1188. A helical membrane pass occupies residues Gly1194 to Leu1218. The Cytoplasmic segment spans residues Arg1219–Arg1224. Residues Glu1225–Glu1243 traverse the membrane as a helical segment. At Asp1244–Thr1267 the chain is on the lumenal side. Residues Tyr1268–Val1288 form a helical membrane-spanning segment. Residue Ala1289 is a topological domain, cytoplasmic. Residues Trp1290–Ser1308 traverse the membrane as a helical segment. At Ser1309 to Asp1315 the chain is on the lumenal side. Residues Trp1316–Leu1336 traverse the membrane as a helical segment. Topologically, residues Lys1337–Ser1344 are cytoplasmic. Residues Trp1345–Leu1365 form a helical membrane-spanning segment. Residues Arg1366–Asp1368 lie on the Lumenal side of the membrane. Residues Val1369 to Gly1389 form a helical membrane-spanning segment. Residues Thr1390–Lys1443 are Cytoplasmic-facing. The tract at residues Val1396–Glu1435 is interacts with and activates NS3 protease. Residues Thr1444–Trp1464 constitute an intramembrane region (helical). Residues His1465 to Thr2146 lie on the Cytoplasmic side of the membrane. A Peptidase S7 domain is found at Ser1474–Glu1651. Catalysis depends on charge relay system; for serine protease NS3 activity residues His1524, Asp1548, and Ser1608. The 157-residue stretch at Glu1654–Glu1810 folds into the Helicase ATP-binding domain. Positions Lys1658–Asn1661 are important for RNA-binding. Residue Leu1667 to Thr1674 participates in ATP binding. The short motif at Asp1758–His1761 is the DEAH box element. The Helicase C-terminal domain occupies Gly1821–Glu1986. Lys1862 is modified (N6-acetyllysine; by host). The helical transmembrane segment at Leu2147–Gly2167 threads the bilayer. Residues Lys2168 to Gly2169 are Lumenal-facing. The helical intramembrane region spans Ile2170–Ala2190. Asp2191 is a topological domain (lumenal). The chain crosses the membrane as a helical span at residues Val2192 to Ile2212. The Cytoplasmic portion of the chain corresponds to Pro2213 to Ala2227. A helical transmembrane segment spans residues Tyr2228–Leu2248. Topologically, residues Glu2249–Asp2273 are lumenal. The segment at residues Leu2274–Leu2294 is an intramembrane region (helical). Over Arg2295–Val2305 the chain is Lumenal. Asn2300 and Asn2304 each carry an N-linked (GlcNAc...) asparagine; by host glycan. The segment at residues Ser2306 to Ile2326 is an intramembrane region (helical). Residues Ser2327 to Pro2346 are Lumenal-facing. A helical transmembrane segment spans residues Leu2347–Leu2367. Over Gln2368–Gln2412 the chain is Cytoplasmic. Residues Val2413–Cys2433 form a helical membrane-spanning segment. The Lumenal segment spans residues Glu2434 to Thr2458. N-linked (GlcNAc...) asparagine; by host glycosylation occurs at Asn2456. A helical transmembrane segment spans residues Ile2459–Leu2479. Topologically, residues Ser2480–Trp3390 are cytoplasmic. The 262-residue stretch at Thr2492–His2753 folds into the mRNA cap 0-1 NS5-type MT domain. Ser2546 is an S-adenosyl-L-methionine binding site. The residue at position 2546 (Ser2546) is a Phosphoserine. Lys2551 (for 2'-O-MTase activity) is an active-site residue. The short motif at Val2567–Leu2570 is the SUMO-interacting motif element. Positions 2576, 2577, 2594, 2595, 2621, and 2622 each coordinate S-adenosyl-L-methionine. Asp2636 functions as the For 2'-O-MTase activity in the catalytic mechanism. Residue Ile2637 participates in S-adenosyl-L-methionine binding. Active-site for 2'-O-MTase activity residues include Lys2670 and Glu2706. Tyr2708 serves as a coordination point for S-adenosyl-L-methionine. Positions 2927, 2931, 2936, and 2939 each coordinate Zn(2+). The RdRp catalytic domain maps to Ala3018–Leu3168. Zn(2+)-binding residues include His3202, Cys3218, and Cys3337.

In the N-terminal section; belongs to the class I-like SAM-binding methyltransferase superfamily. mRNA cap 0-1 NS5-type methyltransferase family. As to quaternary structure, homodimer. Interacts (via N-terminus) with host EXOC1 (via C-terminus); this interaction results in EXOC1 degradation through the proteasome degradation pathway. Forms heterodimers with envelope protein E in the endoplasmic reticulum and Golgi. In terms of assembly, homodimer; in the endoplasmic reticulum and Golgi. Interacts with protein prM. Interacts with non-structural protein 1. As to quaternary structure, homodimer; Homohexamer when secreted. Interacts with envelope protein E. Interacts (via N-terminus) with serine protease NS3. In terms of assembly, forms a heterodimer with serine protease NS3. May form homooligomers. As to quaternary structure, forms a heterodimer with NS2B. Interacts with NS4B. Interacts with unphosphorylated RNA-directed RNA polymerase NS5; this interaction stimulates RNA-directed RNA polymerase NS5 guanylyltransferase activity. Interacts with host SHFL. Interacts with host MAVS; this interaction inhibits the synthesis of IFN-beta. Interacts with host SHFL. Interacts with host AUP1; the interaction occurs in the presence of Dengue virus NS4B and induces lipophagy which facilitates production of virus progeny particles. In terms of assembly, interacts with serine protease NS3. As to quaternary structure, homodimer. Interacts with host STAT2; this interaction inhibits the phosphorylation of the latter, and, when all viral proteins are present (polyprotein), targets STAT2 for degradation. Interacts with serine protease NS3. In terms of processing, specific enzymatic cleavages in vivo yield mature proteins. Cleavages in the lumen of endoplasmic reticulum are performed by host signal peptidase, whereas cleavages in the cytoplasmic side are performed by serine protease NS3. Signal cleavage at the 2K-4B site requires a prior NS3 protease-mediated cleavage at the 4A-2K site. Cleaved in post-Golgi vesicles by a host furin, releasing the mature small envelope protein M, and peptide pr. This cleavage is incomplete as up to 30% of viral particles still carry uncleaved prM. Post-translationally, N-glycosylated. In terms of processing, N-glycosylated. The excreted form is glycosylated and this is required for efficient secretion of the protein from infected cells. Acetylated by host KAT5. Acetylation modulates NS3 RNA-binding and unwinding activities and plays an important positive role for viral replication. Post-translationally, sumoylation of RNA-directed RNA polymerase NS5 increases NS5 protein stability allowing proper viral RNA replication. In terms of processing, phosphorylated on serines residues. This phosphorylation may trigger NS5 nuclear localization.

It is found in the virion. The protein resides in the host nucleus. Its subcellular location is the host cytoplasm. It localises to the host perinuclear region. The protein localises to the secreted. It is found in the virion membrane. The protein resides in the host endoplasmic reticulum membrane. Its subcellular location is the host mitochondrion. It carries out the reaction Selective hydrolysis of -Xaa-Xaa-|-Yaa- bonds in which each of the Xaa can be either Arg or Lys and Yaa can be either Ser or Ala.. It catalyses the reaction RNA(n) + a ribonucleoside 5'-triphosphate = RNA(n+1) + diphosphate. The catalysed reaction is a ribonucleoside 5'-triphosphate + H2O = a ribonucleoside 5'-diphosphate + phosphate + H(+). The enzyme catalyses ATP + H2O = ADP + phosphate + H(+). It carries out the reaction a 5'-end (5'-triphosphoguanosine)-ribonucleoside in mRNA + S-adenosyl-L-methionine = a 5'-end (N(7)-methyl 5'-triphosphoguanosine)-ribonucleoside in mRNA + S-adenosyl-L-homocysteine. It catalyses the reaction a 5'-end (N(7)-methyl 5'-triphosphoguanosine)-ribonucleoside in mRNA + S-adenosyl-L-methionine = a 5'-end (N(7)-methyl 5'-triphosphoguanosine)-(2'-O-methyl-ribonucleoside) in mRNA + S-adenosyl-L-homocysteine + H(+). Functionally, plays a role in virus budding by binding to the cell membrane and gathering the viral RNA into a nucleocapsid that forms the core of a mature virus particle. During virus entry, may induce genome penetration into the host cytoplasm after hemifusion induced by the surface proteins. Can migrate to the cell nucleus where it modulates host functions. Overcomes the anti-viral effects of host EXOC1 by sequestering and degrading the latter through the proteasome degradation pathway. In terms of biological role, inhibits RNA silencing by interfering with host Dicer. Its function is as follows. Prevents premature fusion activity of envelope proteins in trans-Golgi by binding to envelope protein E at pH6.0. After virion release in extracellular space, gets dissociated from E dimers. Acts as a chaperone for envelope protein E during intracellular virion assembly by masking and inactivating envelope protein E fusion peptide. prM is the only viral peptide matured by host furin in the trans-Golgi network probably to avoid catastrophic activation of the viral fusion activity in acidic Golgi compartment prior to virion release. prM-E cleavage is inefficient, and many virions are only partially matured. These uncleaved prM would play a role in immune evasion. Functionally, may play a role in virus budding. Exerts cytotoxic effects by activating a mitochondrial apoptotic pathway through M ectodomain. May display a viroporin activity. In terms of biological role, binds to host cell surface receptor and mediates fusion between viral and cellular membranes. Envelope protein is synthesized in the endoplasmic reticulum in the form of heterodimer with protein prM. They play a role in virion budding in the ER, and the newly formed immature particle is covered with 60 spikes composed of heterodimer between precursor prM and envelope protein E. The virion is transported to the Golgi apparatus where the low pH causes dissociation of PrM-E heterodimers and formation of E homodimers. prM-E cleavage is inefficient, and many virions are only partially matured. These uncleaved prM would play a role in immune evasion. Its function is as follows. Involved in immune evasion, pathogenesis and viral replication. Once cleaved off the polyprotein, is targeted to three destinations: the viral replication cycle, the plasma membrane and the extracellular compartment. Essential for viral replication. Required for formation of the replication complex and recruitment of other non-structural proteins to the ER-derived membrane structures. Excreted as a hexameric lipoparticle that plays a role against host immune response. Antagonizing the complement function. Binds to the host macrophages and dendritic cells. Inhibits signal transduction originating from Toll-like receptor 3 (TLR3). Disrupts the host endothelial glycocalyx layer of host pulmonary microvascular endothelial cells, inducing degradation of sialic acid and shedding of heparan sulfate proteoglycans. NS1 induces expression of sialidases, heparanase, and activates cathepsin L, which activates heparanase via enzymatic cleavage. These effects are probably linked to the endothelial hyperpermeability observed in severe dengue disease. Functionally, component of the viral RNA replication complex that functions in virion assembly and antagonizes the host immune response. In terms of biological role, required cofactor for the serine protease function of NS3. May have membrane-destabilizing activity and form viroporins. Its function is as follows. Displays three enzymatic activities: serine protease, NTPase and RNA helicase. NS3 serine protease, in association with NS2B, performs its autocleavage and cleaves the polyprotein at dibasic sites in the cytoplasm: C-prM, NS2A-NS2B, NS2B-NS3, NS3-NS4A, NS4A-2K and NS4B-NS5. NS3 RNA helicase binds RNA and unwinds dsRNA in the 3' to 5' direction. Regulates the ATPase activity of the NS3 helicase activity. NS4A allows NS3 helicase to conserve energy during unwinding. Plays a role in the inhibition of the host innate immune response. Interacts with host MAVS and thereby prevents the interaction between RIGI and MAVS. In turn, IFN-beta production is impaired. Interacts with host AUP1 which mediates induction of lipophagy in host cells and facilitates production of virus progeny particles. Functionally, functions as a signal peptide for NS4B and is required for the interferon antagonism activity of the latter. In terms of biological role, induces the formation of ER-derived membrane vesicles where the viral replication takes place. Inhibits interferon (IFN)-induced host STAT1 phosphorylation and nuclear translocation, thereby preventing the establishment of cellular antiviral state by blocking the IFN-alpha/beta pathway. Its function is as follows. Replicates the viral (+) and (-) RNA genome, and performs the capping of genomes in the cytoplasm. NS5 methylates viral RNA cap at guanine N-7 and ribose 2'-O positions. Besides its role in RNA genome replication, also prevents the establishment of cellular antiviral state by blocking the interferon-alpha/beta (IFN-alpha/beta) signaling pathway. Inhibits host TYK2 and STAT2 phosphorylation, thereby preventing activation of JAK-STAT signaling pathway. The chain is Genome polyprotein from Dengue virus type 3 (strain Philippines/H87/1956) (DENV-3).